Consider the following 503-residue polypeptide: ATP synthase subunit beta (503 aa).

157 to 164 (GGAGVGKT) contacts ATP.

It belongs to the ATPase alpha/beta chains family. As to quaternary structure, F-type ATPases have 2 components, CF(1) - the catalytic core - and CF(0) - the membrane proton channel. CF(1) has five subunits: alpha(3), beta(3), gamma(1), delta(1), epsilon(1). CF(0) has three main subunits: a(1), b(2) and c(9-12). The alpha and beta chains form an alternating ring which encloses part of the gamma chain. CF(1) is attached to CF(0) by a central stalk formed by the gamma and epsilon chains, while a peripheral stalk is formed by the delta and b chains.

The protein localises to the cell inner membrane. It catalyses the reaction ATP + H2O + 4 H(+)(in) = ADP + phosphate + 5 H(+)(out). In terms of biological role, produces ATP from ADP in the presence of a proton gradient across the membrane. The catalytic sites are hosted primarily by the beta subunits. This is ATP synthase subunit beta from Flavobacterium psychrophilum (strain ATCC 49511 / DSM 21280 / CIP 103535 / JIP02/86).